The following is a 209-amino-acid chain: Thiamine-phosphate synthase (209 aa).

Residues 41 to 45 (QYRNK) and N73 contribute to the 4-amino-2-methyl-5-(diphosphooxymethyl)pyrimidine site. Residues D74 and D93 each coordinate Mg(2+). S112 lines the 4-amino-2-methyl-5-(diphosphooxymethyl)pyrimidine pocket. 139–141 (SST) is a 2-[(2R,5Z)-2-carboxy-4-methylthiazol-5(2H)-ylidene]ethyl phosphate binding site. Position 142 (K142) interacts with 4-amino-2-methyl-5-(diphosphooxymethyl)pyrimidine. G168 contributes to the 2-[(2R,5Z)-2-carboxy-4-methylthiazol-5(2H)-ylidene]ethyl phosphate binding site.

It belongs to the thiamine-phosphate synthase family. Requires Mg(2+) as cofactor.

The catalysed reaction is 2-[(2R,5Z)-2-carboxy-4-methylthiazol-5(2H)-ylidene]ethyl phosphate + 4-amino-2-methyl-5-(diphosphooxymethyl)pyrimidine + 2 H(+) = thiamine phosphate + CO2 + diphosphate. It catalyses the reaction 2-(2-carboxy-4-methylthiazol-5-yl)ethyl phosphate + 4-amino-2-methyl-5-(diphosphooxymethyl)pyrimidine + 2 H(+) = thiamine phosphate + CO2 + diphosphate. The enzyme catalyses 4-methyl-5-(2-phosphooxyethyl)-thiazole + 4-amino-2-methyl-5-(diphosphooxymethyl)pyrimidine + H(+) = thiamine phosphate + diphosphate. The protein operates within cofactor biosynthesis; thiamine diphosphate biosynthesis; thiamine phosphate from 4-amino-2-methyl-5-diphosphomethylpyrimidine and 4-methyl-5-(2-phosphoethyl)-thiazole: step 1/1. Condenses 4-methyl-5-(beta-hydroxyethyl)thiazole monophosphate (THZ-P) and 2-methyl-4-amino-5-hydroxymethyl pyrimidine pyrophosphate (HMP-PP) to form thiamine monophosphate (TMP). The polypeptide is Thiamine-phosphate synthase (Methylobacillus flagellatus (strain ATCC 51484 / DSM 6875 / VKM B-1610 / KT)).